The following is a 149-amino-acid chain: Transcriptional repressor NrdR (149 aa).

The segment at 3-34 (CPFCSENDTKVIDSRLVADGHQVRRRRQCLAC) is a zinc-finger region. An ATP-cone domain is found at 49–139 (PKVIKSNGNR…VYRSFEDIRE (91 aa)).

Belongs to the NrdR family. The cofactor is Zn(2+).

In terms of biological role, negatively regulates transcription of bacterial ribonucleotide reductase nrd genes and operons by binding to NrdR-boxes. This chain is Transcriptional repressor NrdR, found in Vibrio vulnificus (strain YJ016).